A 189-amino-acid chain; its full sequence is Batroxicidin (189 aa).

Positions 1–22 (MQGFFWKTWLVVALCGTSSSLA) are cleaved as a signal peptide. A propeptide spanning residues 23 to 155 (HRPLSYGEAL…DEEKDRPKRV (133 aa)) is cleaved from the precursor. 2 disulfides stabilise this stretch: C79/C90 and C101/C118. Acidic residues predominate over residues 125–148 (EEEEEDEEEQKAEVEKDEEKEDEE). A disordered region spans residues 125–152 (EEEEEDEEEQKAEVEKDEEKEDEEKDRP).

It belongs to the cathelicidin family. As to expression, expressed by the venom gland.

It localises to the secreted. The protein localises to the target cell membrane. Functionally, potent antimicrobial peptide against Gram-negative (MIC=0.25 ug/ml against E.coli ATCC 25922, MIC=1 ug/ml against P.aeruginosa) and Gram-positive bacteria (MIC=32 ug/ml against E.faecalis, MIC=32 ug/ml against S.aureus). Adopts an amphipathic alpha helical conformation, that may allow to partition into the target membrane. Low hemolytic activities have been observed on mammalian cells. In addition, when tested in vitro on the parasite Trypanosoma cruzi (responsible of the Chagas disease), is able to reduce the number of the three forms (epimastigote, trypomastigote and amastigote) by inducing cell death through necrosis. The chain is Batroxicidin from Bothrops atrox (Barba amarilla).